A 217-amino-acid polypeptide reads, in one-letter code: Segregation and condensation protein B (217 aa).

The protein belongs to the ScpB family. In terms of assembly, homodimer. Homodimerization may be required to stabilize the binding of ScpA to the Smc head domains. Component of a cohesin-like complex composed of ScpA, ScpB and the Smc homodimer, in which ScpA and ScpB bind to the head domain of Smc. The presence of the three proteins is required for the association of the complex with DNA.

Its subcellular location is the cytoplasm. Functionally, participates in chromosomal partition during cell division. May act via the formation of a condensin-like complex containing Smc and ScpA that pull DNA away from mid-cell into both cell halves. The sequence is that of Segregation and condensation protein B from Geobacillus kaustophilus (strain HTA426).